A 283-amino-acid polypeptide reads, in one-letter code: Putative S-adenosyl-L-methionine-dependent methyltransferase SCO7813 (283 aa).

S-adenosyl-L-methionine contacts are provided by residues Asp121 and 150 to 151 (DL). The disordered stretch occupies residues 264–283 (MSTLPQHEDGPGGLISAVRR).

This sequence belongs to the UPF0677 family.

Its function is as follows. Exhibits S-adenosyl-L-methionine-dependent methyltransferase activity. The sequence is that of Putative S-adenosyl-L-methionine-dependent methyltransferase SCO7813 from Streptomyces coelicolor (strain ATCC BAA-471 / A3(2) / M145).